The sequence spans 457 residues: ATP synthase subunit beta (457 aa).

150 to 157 (GGAGVGKT) is an ATP binding site.

This sequence belongs to the ATPase alpha/beta chains family. In terms of assembly, F-type ATPases have 2 components, CF(1) - the catalytic core - and CF(0) - the membrane proton channel. CF(1) has five subunits: alpha(3), beta(3), gamma(1), delta(1), epsilon(1). CF(0) has three main subunits: a(1), b(2) and c(9-12). The alpha and beta chains form an alternating ring which encloses part of the gamma chain. CF(1) is attached to CF(0) by a central stalk formed by the gamma and epsilon chains, while a peripheral stalk is formed by the delta and b chains.

It localises to the cell membrane. The catalysed reaction is ATP + H2O + 4 H(+)(in) = ADP + phosphate + 5 H(+)(out). In terms of biological role, produces ATP from ADP in the presence of a proton gradient across the membrane. The catalytic sites are hosted primarily by the beta subunits. The chain is ATP synthase subunit beta from Baumannia cicadellinicola subsp. Homalodisca coagulata.